The chain runs to 968 residues: uncharacterized protein (968 aa).

5 disordered regions span residues 124 to 177, 348 to 437, 572 to 595, 608 to 627, and 837 to 877; these read SSIS…FSFP, QEDS…VNDS, TTTT…QQNT, PKAS…GSSK, and KASK…KKGK. Positions 131–157 are enriched in polar residues; it reads TIESNYLSNPSSPCQSTPILESSTPFS. 3 stretches are compositionally biased toward low complexity: residues 158–177, 352–431, and 572–593; these read QKLM…FSFP, NNNN…NCNN, and TTTT…QQQQ. Over residues 841–857 the composition is skewed to low complexity; it reads DSSSSPTASSAAPGDSS.

This is an uncharacterized protein from Dictyostelium discoideum (Social amoeba).